A 40-amino-acid chain; its full sequence is Sapecin-C (40 aa).

3 disulfides stabilise this stretch: Cys3/Cys30, Cys16/Cys36, and Cys20/Cys38.

It belongs to the invertebrate defensin family. Type 1 subfamily. Hemocytes and fat body.

It is found in the secreted. Sapecins, which are potent bactericidal proteins, are produced in response to injury. Sapecin C is cytotoxic to Gram-positive bacteria. This is Sapecin-C from Sarcophaga peregrina (Flesh fly).